The primary structure comprises 263 residues: Endonuclease 8 (263 aa).

Pro-2 (schiff-base intermediate with DNA) is an active-site residue. Catalysis depends on Glu-3, which acts as the Proton donor. Lys-53 serves as the catalytic Proton donor; for beta-elimination activity. 3 residues coordinate DNA: Gln-70, Arg-125, and Asn-169. An FPG-type zinc finger spans residues 229–263 (KVFHRDGELCERCGGIIEKTTLSSRPFYWCPGCQH). Residue Arg-253 is the Proton donor; for delta-elimination activity of the active site.

This sequence belongs to the FPG family. It depends on Zn(2+) as a cofactor.

The catalysed reaction is 2'-deoxyribonucleotide-(2'-deoxyribose 5'-phosphate)-2'-deoxyribonucleotide-DNA = a 3'-end 2'-deoxyribonucleotide-(2,3-dehydro-2,3-deoxyribose 5'-phosphate)-DNA + a 5'-end 5'-phospho-2'-deoxyribonucleoside-DNA + H(+). Functionally, involved in base excision repair of DNA damaged by oxidation or by mutagenic agents. Acts as a DNA glycosylase that recognizes and removes damaged bases. Has a preference for oxidized pyrimidines, such as thymine glycol, 5,6-dihydrouracil and 5,6-dihydrothymine. Has AP (apurinic/apyrimidinic) lyase activity and introduces nicks in the DNA strand. Cleaves the DNA backbone by beta-delta elimination to generate a single-strand break at the site of the removed base with both 3'- and 5'-phosphates. This chain is Endonuclease 8, found in Escherichia coli O157:H7.